We begin with the raw amino-acid sequence, 180 residues long: Oligoribonuclease (180 aa).

The Exonuclease domain occupies 7–170; it reads LIWIDLEMTG…DDIRESIAEL (164 aa). Tyr-128 is an active-site residue.

Belongs to the oligoribonuclease family.

The protein localises to the cytoplasm. In terms of biological role, 3'-to-5' exoribonuclease specific for small oligoribonucleotides. This chain is Oligoribonuclease, found in Pseudomonas paraeruginosa (strain DSM 24068 / PA7) (Pseudomonas aeruginosa (strain PA7)).